The primary structure comprises 331 residues: Glycerophosphodiester phosphodiesterase 1 (331 aa).

At Met1–Leu3 the chain is on the cytoplasmic side. The helical transmembrane segment at Trp4–Val24 threads the bilayer. Over Thr25–Ser248 the chain is Lumenal. Residues Val65 to Phe331 enclose the GP-PDE domain. Residues Glu97 and Asp99 each contribute to the Mg(2+) site. N-linked (GlcNAc...) asparagine glycosylation occurs at Asn168. Residue Asp174 coordinates Mg(2+). The helical transmembrane segment at Val249–Cys269 threads the bilayer. Topologically, residues Gly270–Phe331 are cytoplasmic.

Belongs to the glycerophosphoryl diester phosphodiesterase family. As to quaternary structure, interacts with PRAF2. Interacts with RGS16. Requires Mg(2+) as cofactor. In terms of processing, N-glycosylated. Detected in heart, brain, lung, liver, skeletal muscle, kidney, pituitary and testis.

Its subcellular location is the cell membrane. It localises to the cytoplasmic vesicle membrane. It catalyses the reaction sn-glycero-3-phospho-1D-myo-inositol + H2O = myo-inositol + sn-glycerol 3-phosphate + H(+). The catalysed reaction is 1-O-(1Z-octadecenyl)-sn-glycero-3-phospho-(N-5Z,8Z,11Z,14Z-eicosatetraenoyl)-ethanolamine + H2O = 1-O-(1Z-octadecenyl)-sn-glycero-3-phosphate + N-(5Z,8Z,11Z,14Z-eicosatetraenoyl)-ethanolamine + H(+). It carries out the reaction 1-O-(1Z-octadecenyl)-sn-glycero-3-phospho-(N-9Z-octadecenoyl)-ethanolamine + H2O = 1-O-(1Z-octadecenyl)-sn-glycero-3-phosphate + N-(9Z-octadecenoyl) ethanolamine + H(+). The enzyme catalyses 1-O-(1Z-octadecenyl)-sn-glycero-3-phospho-N-hexadecanoyl-ethanolamine + H2O = 1-O-(1Z-octadecenyl)-sn-glycero-3-phosphate + N-hexadecanoylethanolamine + H(+). It catalyses the reaction N-(4Z,7Z,10Z,13Z,16Z,19Z)-docosahexaenoyl-sn-glycero-3-phosphoethanolamine + H2O = N-(4Z,7Z,10Z,13Z,16Z,19Z)-docosahexaenoyl ethanolamine + sn-glycerol 3-phosphate + H(+). The catalysed reaction is N-eicosanoyl-sn-glycero-3-phosphoethanolamine + H2O = N-eicosanoyl ethanolamine + sn-glycerol 3-phosphate + H(+). It carries out the reaction N-hexadecanoyl-sn-glycero-3-phosphoethanolamine + H2O = N-hexadecanoylethanolamine + sn-glycerol 3-phosphate + H(+). The enzyme catalyses N-(9Z-octadecenoyl)-sn-glycero-3-phosphoethanolamine + H2O = N-(9Z-octadecenoyl) ethanolamine + sn-glycerol 3-phosphate + H(+). It catalyses the reaction N-(5Z,8Z,11Z,14Z-eicosatetraenoyl)-sn-glycero-3-phosphoethanolamine + H2O = N-(5Z,8Z,11Z,14Z-eicosatetraenoyl)-ethanolamine + sn-glycerol 3-phosphate + H(+). Its activity is regulated as follows. Inhibited by EDTA, calcium chloride, and zinc chloride. Enhanced by magnesium chloride. Glycerophosphodiester phosphodiesterase activity can be modulated by G-protein signaling pathways. Functionally, hydrolyzes the phosphodiester bond of glycerophosphodiesters such as glycerophosphoinositol (GroPIns) and glycerophosphoethanolamine (GroPEth), to yield a glycerol phosphate and an alcohol. Hydrolyzes glycerophospho-N-acylethanolamines to N-acylethanolamines in the brain and participates in bioactive N-acylethanolamine biosynthesis such as anandamide (an endocannabinoid), N-palmitoylethanolamine (an anti-inflammatory), and N-oleoylethanolamine (an anorexic). In addition, has a lysophospholipase D activity by hydrolyzing N-acyl-lysoplasmenylethanolamine (N-acyl-lysoPlsEt) to N-acylethanolamine. However lysophospholipase D activity is lower than glycerophosphodiester phosphodiesterase activity. Has little or no activity towards glycerophosphocholine. This Rattus norvegicus (Rat) protein is Glycerophosphodiester phosphodiesterase 1.